Here is a 223-residue protein sequence, read N- to C-terminus: Cytidylate kinase (223 aa).

ATP is bound at residue 12-20; that stretch reads GPSGVGKGT.

This sequence belongs to the cytidylate kinase family. Type 1 subfamily.

It localises to the cytoplasm. It carries out the reaction CMP + ATP = CDP + ADP. The catalysed reaction is dCMP + ATP = dCDP + ADP. This Xylella fastidiosa (strain M23) protein is Cytidylate kinase.